Reading from the N-terminus, the 200-residue chain is Interferon lambda-1 (200 aa).

A signal peptide spans 1–19 (MAAAWTVVLVTLVLGLAVA). Asn-65 carries N-linked (GlcNAc...) asparagine glycosylation. A disulfide bridge connects residues Cys-68 and Cys-164.

Belongs to the lambda interferon family.

The protein localises to the secreted. In terms of biological role, cytokine with antiviral, antitumour and immunomodulatory activities. Plays a critical role in the antiviral host defense, predominantly in the epithelial tissues. Acts as a ligand for the heterodimeric class II cytokine receptor composed of IL10RB and IFNLR1, and receptor engagement leads to the activation of the JAK/STAT signaling pathway resulting in the expression of IFN-stimulated genes (ISG), which mediate the antiviral state. Has a restricted receptor distribution and therefore restricted targets: is primarily active in epithelial cells and this cell type-selective action is because of the epithelial cell-specific expression of its receptor IFNLR1. Exerts an immunomodulatory effect by up-regulating MHC class I antigen expression. The chain is Interferon lambda-1 (IFNL1) from Homo sapiens (Human).